Consider the following 783-residue polypeptide: Cyclic di-GMP phosphodiesterase NbdA (783 aa).

The 194-residue stretch at tyrosine 81–serine 274 folds into the MHYT domain. Helical transmembrane passes span serine 84 to valine 104, isoleucine 120 to phenylalanine 140, leucine 150 to methionine 170, phenylalanine 176 to histidine 196, leucine 215 to proline 235, leucine 255 to valine 275, and leucine 292 to tryptophan 312. The Cytoplasmic portion of the chain corresponds to serine 313–alanine 783. The 133-residue stretch at lysine 375–arginine 507 folds into the GGDEF domain. Positions glutamate 516–arginine 770 constitute an EAL domain. Positions 537, 551, 555, 610, and 615 each coordinate 3',3'-c-di-GMP. Mg(2+) is bound at residue glutamate 551. A Mg(2+)-binding site is contributed by asparagine 610. Residues glutamate 642, aspartate 672, and aspartate 673 each contribute to the Mg(2+) site. Aspartate 672 is a 3',3'-c-di-GMP binding site. A 3',3'-c-di-GMP-binding site is contributed by arginine 696. A Mg(2+)-binding site is contributed by glutamate 729. Glutamate 732 and tyrosine 751 together coordinate 3',3'-c-di-GMP.

The cofactor is Mg(2+).

Its subcellular location is the cell inner membrane. It catalyses the reaction 3',3'-c-di-GMP + H2O = 5'-phosphoguanylyl(3'-&gt;5')guanosine + H(+). PDE activity is stimulated by GTP. It could also be stimulated by NO. Its function is as follows. Displays c-di-GMP-specific phosphodiesterase (PDE) activity. Seems to play a specific role in nitric oxide (NO)-induced biofilm dispersion. Enhanced NbdA synthesis in the presence of NO increases PDE activity, leading to reduced cellular c-di-GMP levels and biofilm dispersion. Does not show diguanylate cyclase (DGC) activity. In Pseudomonas aeruginosa (strain ATCC 15692 / DSM 22644 / CIP 104116 / JCM 14847 / LMG 12228 / 1C / PRS 101 / PAO1), this protein is Cyclic di-GMP phosphodiesterase NbdA.